Here is a 1825-residue protein sequence, read N- to C-terminus: MNKLVKRRFQAGLGSEIKRVYKEGQQINTLLLAQVIQVNYKYNTVDLLALQHKEVFQNSYANEGRFSARLPMEFGGRNIVGQPYGQVNPIAVGTVVLVGFINSDKDMPIVISVYNNNDVSKQLSRTQFSNSDPKDLELIGDMHQKFSLYPSLTYDSVDGEGGRVVTFSGKSFIAFDTKEVANSSTTDAGYGTKYEDLETSYYNNGDLIEPMKGRAPNVLFKHQGVLDDDGKPDLHDLLIHINPDGTYRTSMMNKEEDWRTLFEMTPDGRVKLRKQDSINIDGGIEISELGINNEGFVYLRNGDMDLEVRKDGIYSQGKLFTADVDLSDVYDKLNGLSIQIKETNGQLEIIANGVEEQNGKISELSTEITIVAGKVESKVTKTEVQDMIDSSFVDMSDAIKKAQEDADKANKVIADMSSDNRLTPSEKIDLLKEWDIIKNEYPSYLEQAETYEVDSKDYTAKYNSLELFVTPILADMESTSSVDGATLRKTFNSYYTARIALLNSISKKLKDGITEAMKKASQASLDATQAMADASQAKIDADNANKLISDIASDNKLTPSEKYQLKKEWDVIVKEYPTTIAQAEKYAVDTAEYTAKYKALELFVEPLFKDMDETSIVDGERLRATFSDYYASKIALLKEVTDSAKTELDAYGNKISVMETNITQTSEAITLLATRVQTVEDGVQSNKAQIEIQAEQISQKVTASEVKGIVDDSINNLTLGGTNLFVIKTQTAGLLNENDGTVGTAVDNSVVSDYIKVNQKTPYIATLYGNTGTNMIITDWYDKNRTFISGEAVADSGDFSKKYVSPENAVYARVSYKKANSVNIKFEAGTKATDYSPSWEDIKGDQTALEEYIKKVEEQAKKAQQDAENAKNDAENANNAIADMSNDNMLAPNEKKQILLQWEQIKTEYPINLDQATKFGVSSQQYTTAYNALDEYLKPILADMTTTSVVVGSTLRNTFNNYYDKRTTLLNRISDVAKNVADKAQETADTINDNLQNIGGYNYVGFSSGDNMLPRLMIKNVGYYTLGSSTTEFIDSMVAVKGDATTQPFDYTVGTSDKEIAGGGLADYRMKEVKEGQWLTASANVQVIDGGSARLAIYTLEGDNWVGSNSTPIQVSDGLKRVVAQRKVTGLTKGVLIRIESADTNVKEFRFGNVQLEVGIIPTPWKKSDIDIQEDINNVVQNIKTYTAWANDLQGLDFTREKVEGKTYMYVGTSMKDSDNYSDYTWRLTDEHIEGQINGKEGAWIYSPTAPTNPSQGLIWVDLSKVPNQPKRWVDSETGWVALTPEEVKDLPWGEDGTNLADWVAQAEQRISSDSIINTVLGSEDFTSVFDTKANTTDLDNLATYEDLDSIKEDYNRLIKEGINGIDFTPYVTNSELQQLKDSFNFSVQQAGGVNMLKNSLGFSGLDFWDGTVGKNLLPNSTWNLGFGRWGGASIASFEILPPEDDKPTSHILGSIGSRSSTKEIGNRPHPLKVNSGETYTISFDYKEEALAYDKDRPILVVRNYPDKDTDQWMEYSIEGWAVMANGSTTDLTVWRRFTKTFTIGTSGYLDILPKTIVESWTHRSFWRELKIEEGSQATTWVPNKEDGAFTGGIVETTQTEELANLGFGSGFVSSKRPSSSLTQSVELPEIGANLEYSLSFYMKVTTDNPVADFKCGIRVYEGDTLTYTLGIEDATQPIPLGFQQYKLVFTPTSTSTKIEMFVENGQEASVIISGIMYNIGNIPLKWQPYPSEIYNTNVKIDINGVTVKNNQTDGYTMITPQEFSGYSRIDGNIERIFTLNGQVTEVKMLKAEKRITMEPVSVFAMNTVTDTKRIRGWAFVPSFE.

Coiled coils occupy residues 393-466, 681-701, 843-891, and 975-998; these read VDMS…NSLE, DGVQ…SQKV, KGDQ…NMLA, and DVAK…LQNI.

The protein localises to the virion. Functionally, structural protein, a component of a tail fiber. In Enterococcus faecalis (Streptococcus faecalis), this protein is Tail fiber protein.